The primary structure comprises 341 residues: Geranylgeranyl transferase type-2 subunit beta (341 aa).

6 PFTB repeats span residues 15–55, 62–104, 122–163, 170–211, 223–264, and 271–313; these read KSKH…ITMN, QQDV…KIYD, RERL…SLLN, ADTA…AIMN, VKLI…SILK, and LKIL…SLID. Geranylgeranyl diphosphate-binding positions include 196–198 and 243–255; these read HAA and RPEKLPDVCYSWW. Residues aspartate 249, cysteine 251, and histidine 301 each contribute to the Zn(2+) site.

It belongs to the protein prenyltransferase subunit beta family. In terms of assembly, heterodimer of an alpha and a beta subunit. Zn(2+) is required as a cofactor.

It carries out the reaction geranylgeranyl diphosphate + L-cysteinyl-[protein] = S-geranylgeranyl-L-cysteinyl-[protein] + diphosphate. Catalyzes the transfer of a geranyl-geranyl moiety from geranyl-geranyl pyrophosphate to proteins having the C-terminal -XCC or -XCXC, where both cysteines may become modified. Acts on YPT1 and SEC4. The sequence is that of Geranylgeranyl transferase type-2 subunit beta (BET2) from Candida albicans (Yeast).